Reading from the N-terminus, the 274-residue chain is MPQGITKTSNQIIPEVLAPMMQAQLEKKLRFASFAEVDSTLQGQPGDTLTFPAFVYSGDAQVVAEGEKIPTDILETKKREAKIRKIAKGTSITDEALLSGYGDPQGEQVRQHGLAHANKVDNDVLEALMGAKLTVNADITKLNGLQSAIDKFNDEDLEPMVLFINPLDAGKLRGDASTNFTRATELGDDIIVKGAFGEALGAIIVRTNKLEAGTAILAKKGAVKLILKRDFFLEVARDASTKTTALYSDKHYVAYLYDESKAVKITKGSGSLEM.

The protein resides in the virion. Its function is as follows. Assembles to form an icosahedral capsid. This is Major capsid protein from Staphylococcus phage phiMR11.